We begin with the raw amino-acid sequence, 71 residues long: Translation initiation factor IF-1 (71 aa).

The S1-like domain occupies 1 to 71; it reads MAKQAAIEQD…LTKARITYRY (71 aa).

It belongs to the IF-1 family. In terms of assembly, component of the 30S ribosomal translation pre-initiation complex which assembles on the 30S ribosome in the order IF-2 and IF-3, IF-1 and N-formylmethionyl-tRNA(fMet); mRNA recruitment can occur at any time during PIC assembly.

It is found in the cytoplasm. One of the essential components for the initiation of protein synthesis. Stabilizes the binding of IF-2 and IF-3 on the 30S subunit to which N-formylmethionyl-tRNA(fMet) subsequently binds. Helps modulate mRNA selection, yielding the 30S pre-initiation complex (PIC). Upon addition of the 50S ribosomal subunit IF-1, IF-2 and IF-3 are released leaving the mature 70S translation initiation complex. In Christiangramia forsetii (strain DSM 17595 / CGMCC 1.15422 / KT0803) (Gramella forsetii), this protein is Translation initiation factor IF-1.